Consider the following 175-residue polypeptide: NADH-ubiquinone oxidoreductase chain 6 (175 aa).

5 helical membrane-spanning segments follow: residues Met-1–Ser-21, Ser-25–Leu-45, Phe-47–Val-67, Ala-88–Leu-108, and Tyr-149–Met-169.

Belongs to the complex I subunit 6 family. In terms of assembly, core subunit of respiratory chain NADH dehydrogenase (Complex I) which is composed of 45 different subunits.

The protein resides in the mitochondrion inner membrane. The catalysed reaction is a ubiquinone + NADH + 5 H(+)(in) = a ubiquinol + NAD(+) + 4 H(+)(out). In terms of biological role, core subunit of the mitochondrial membrane respiratory chain NADH dehydrogenase (Complex I) which catalyzes electron transfer from NADH through the respiratory chain, using ubiquinone as an electron acceptor. Essential for the catalytic activity and assembly of complex I. The polypeptide is NADH-ubiquinone oxidoreductase chain 6 (MT-ND6) (Phoca vitulina (Harbor seal)).